An 822-amino-acid polypeptide reads, in one-letter code: Probable RING finger protein 207 homolog (822 aa).

Residues Cys-8–Ser-42 form an RING-type zinc finger. The B box-type 1; atypical zinc finger occupies Glu-68 to Ser-115. Residues Cys-73, Cys-76, Cys-97, and His-102 each coordinate Zn(2+). Residues Tyr-122 to Ile-164 form a B box-type 2; degenerate zinc finger. Coiled-coil stretches lie at residues Asn-526–Ala-558 and Asp-738–Glu-769.

The protein is Probable RING finger protein 207 homolog of Caenorhabditis elegans.